A 278-amino-acid chain; its full sequence is MPYVTTKDNVEIFYKDWGPKDAQPIVFHHGWPLSGDDWDAQMLFFVQKGYRVIAHDRRGHGRSAQVSDGHDMDHYAADAFAVVEALDLRNAVHIGHSTGGGEVARYVANDGQPAGRVAKAVLVSAVPPLMLKTESNPEGLPIEVFDGFRKALADNRAQFFLDVPTGPFYGFNRAGATVHQGVIRNWWRQGMEGSAKAHYDGIKAFSETDQTEDLKSITVPTLVLHGEDDQIVPIADAALKSIKLLQNGTLKTYPGYSHGMLTVNADVLNADLLAFVQA.

Residues 24–259 (PIVFHHGWPL…LKTYPGYSHG (236 aa)) form the AB hydrolase-1 domain. Active-site residues include serine 97, aspartate 229, and histidine 258.

The protein belongs to the AB hydrolase superfamily. Bacterial non-heme haloperoxidase / perhydrolase family. As to quaternary structure, homodimer.

In terms of biological role, chlorinates and brominates suitable organic compounds. Involved in the biosynthesis of the antibiotic pyrrolnitrin. This chain is Non-heme chloroperoxidase (cpo), found in Burkholderia pyrrocinia (Pseudomonas pyrrocinia).